The sequence spans 601 residues: Glutamine--tRNA ligase (601 aa).

A 'HIGH' region motif is present at residues 76 to 86 (PEPNGYLHIGH). ATP-binding positions include 77–79 (EPN) and 83–89 (HIGHAKS). The L-glutamine site is built by Asp-109 and Tyr-253. ATP is bound by residues Thr-272, 301 to 302 (RL), and 309 to 311 (MSK). Residues 308–312 (VMSKR) carry the 'KMSKS' region motif.

It belongs to the class-I aminoacyl-tRNA synthetase family. In terms of assembly, monomer.

Its subcellular location is the cytoplasm. The enzyme catalyses tRNA(Gln) + L-glutamine + ATP = L-glutaminyl-tRNA(Gln) + AMP + diphosphate. The sequence is that of Glutamine--tRNA ligase from Rhodopirellula baltica (strain DSM 10527 / NCIMB 13988 / SH1).